We begin with the raw amino-acid sequence, 347 residues long: GMP reductase (347 aa).

108 to 131 is an NADP(+) binding site; the sequence is TDFEKTKQILIANPALNFLCIDVA. K(+) is bound by residues Gly181 and Gly183. Cys186 (thioimidate intermediate) is an active-site residue. 216 to 239 provides a ligand contact to NADP(+); that stretch reads IISDGGCTMPGDVAKAFGGGADFV.

This sequence belongs to the IMPDH/GMPR family. GuaC type 1 subfamily. In terms of assembly, homotetramer.

The enzyme catalyses IMP + NH4(+) + NADP(+) = GMP + NADPH + 2 H(+). Functionally, catalyzes the irreversible NADPH-dependent deamination of GMP to IMP. It functions in the conversion of nucleobase, nucleoside and nucleotide derivatives of G to A nucleotides, and in maintaining the intracellular balance of A and G nucleotides. The sequence is that of GMP reductase from Enterobacter sp. (strain 638).